A 617-amino-acid polypeptide reads, in one-letter code: Guanylate cyclase soluble subunit beta-2 (617 aa).

Residue His26 participates in heme binding. The Guanylate cyclase domain occupies 391–519 (TILFSDVVTF…DTVNTASRME (129 aa)). The segment covering 577 to 586 (RSKTPVDHKG) has biased composition (basic and acidic residues). The disordered stretch occupies residues 577 to 605 (RSKTPVDHKGSTQKASLPTTKLQGSVQPS). The segment covering 588–604 (TQKASLPTTKLQGSVQP) has biased composition (polar residues).

This sequence belongs to the adenylyl cyclase class-4/guanylyl cyclase family. Heterodimer of an alpha and a beta chain. The cofactor is heme. In terms of tissue distribution, expressed in gastric signet ring cell carcinoma, but not in the normal stomach.

It localises to the cytoplasm. The catalysed reaction is GTP = 3',5'-cyclic GMP + diphosphate. Its activity is regulated as follows. Activated by nitric oxide in the presence of magnesium or manganese ions. The protein is Guanylate cyclase soluble subunit beta-2 (GUCY1B2) of Homo sapiens (Human).